We begin with the raw amino-acid sequence, 495 residues long: Bile acid-sensitive ion channel (495 aa).

The tract at residues 1–30 (MEHTEKSKGPAEKGLLGKIRRYLSKRPLPS) is binds the plasma membrane and stabilizes the channel in the closed state. The Cytoplasmic segment spans residues 1 to 61 (MEHTEKSKGP…NIAQNQNKVR (61 aa)). The chain crosses the membrane as a helical span at residues 62–82 (KVIWLSVVLGSVSLLVWQIYS). Residues 83–459 (RLVNYFMWPT…GLFCGASLIT (377 aa)) are Extracellular-facing. 6 disulfides stabilise this stretch: C112–C207, C185–C192, C298–C377, C315–C373, C328–C350, and C330–C342. N147 and N163 each carry an N-linked (GlcNAc...) asparagine glycan. N306 is a glycosylation site (N-linked (GlcNAc...) asparagine). N370, N405, and N421 each carry an N-linked (GlcNAc...) asparagine glycan. Positions 454-456 (GAS) match the GAS motif; ion selectivity filter motif. A helical membrane pass occupies residues 460–480 (IIEIIEYLFTSFYWVFIFFLL). The Cytoplasmic portion of the chain corresponds to 481–495 (KILEMIQRTSPPQTV).

It belongs to the amiloride-sensitive sodium channel (TC 1.A.6) family. ASIC5 subfamily. In terms of assembly, forms homotrimeric channels. As to expression, expressed by cholangiocytes (at protein level). Detected in brain, liver, duodenum, jejunum, ileum and testis.

The protein resides in the apical cell membrane. It is found in the cell membrane. It catalyses the reaction Na(+)(in) = Na(+)(out). The catalysed reaction is Li(+)(in) = Li(+)(out). The enzyme catalyses K(+)(in) = K(+)(out). It carries out the reaction H(+)(in) = H(+)(out). With respect to regulation, inhibited by the diuretic drug amiloride. Inhibited by diminazene. Inhibited by extracellular Ca(2+). Functionally, forms bile acid-gated sodium channels and may play a role in bile acid-dependent absorption and secretion by epithelial cells of the bile ducts. Displays high selectivity for sodium ions but can also permit the permeation of other cations. The gating could be indirect and the consequence of alterations of the membrane environment of the channel by bile acids. As a sodium channel of type II unipolar brush cells of the vestibulocerebellum, controlling the electrical activity of these cells, could play a role in motor coordination and balance. The sequence is that of Bile acid-sensitive ion channel from Rattus norvegicus (Rat).